The chain runs to 282 residues: MAAKIISGTELSKQIKANLADKITHYIEQGKRAPGLAVILVGADPASQIYVGNKRKSCEEVGILSKSYDLPETTTQNELLAIIDQLNADKNIDGILVQLPLPKQINAEAIIERIDPKKDVDGFHPYNVGRLCQRIPTLRACTPYGVMKLLETTGIDLHGKHAVIVGASNIVGRPMSLELLLAGATVTVTHRFTKNLENHVRQADILVVAVGKPNLISGDWIKESAVVIDVGINRVDGKLVGDVEFDKAAEKAAYITPVPGGVGPMTVAMLMSNTLYAYEHNK.

NADP(+) is bound by residues G166 to S168 and I232.

This sequence belongs to the tetrahydrofolate dehydrogenase/cyclohydrolase family. In terms of assembly, homodimer.

The enzyme catalyses (6R)-5,10-methylene-5,6,7,8-tetrahydrofolate + NADP(+) = (6R)-5,10-methenyltetrahydrofolate + NADPH. The catalysed reaction is (6R)-5,10-methenyltetrahydrofolate + H2O = (6R)-10-formyltetrahydrofolate + H(+). It participates in one-carbon metabolism; tetrahydrofolate interconversion. Its function is as follows. Catalyzes the oxidation of 5,10-methylenetetrahydrofolate to 5,10-methenyltetrahydrofolate and then the hydrolysis of 5,10-methenyltetrahydrofolate to 10-formyltetrahydrofolate. The polypeptide is Bifunctional protein FolD (Haemophilus influenzae (strain PittEE)).